A 628-amino-acid polypeptide reads, in one-letter code: Phosphomethylpyrimidine synthase (628 aa).

Substrate-binding positions include Asn225, Met254, Tyr283, His319, 339 to 341 (SRG), 380 to 383 (DGLR), and Glu419. His423 is a binding site for Zn(2+). Position 446 (Tyr446) interacts with substrate. His487 provides a ligand contact to Zn(2+). The [4Fe-4S] cluster site is built by Cys567, Cys570, and Cys575.

This sequence belongs to the ThiC family. Homodimer. [4Fe-4S] cluster serves as cofactor.

It carries out the reaction 5-amino-1-(5-phospho-beta-D-ribosyl)imidazole + S-adenosyl-L-methionine = 4-amino-2-methyl-5-(phosphooxymethyl)pyrimidine + CO + 5'-deoxyadenosine + formate + L-methionine + 3 H(+). It functions in the pathway cofactor biosynthesis; thiamine diphosphate biosynthesis. Its function is as follows. Catalyzes the synthesis of the hydroxymethylpyrimidine phosphate (HMP-P) moiety of thiamine from aminoimidazole ribotide (AIR) in a radical S-adenosyl-L-methionine (SAM)-dependent reaction. The protein is Phosphomethylpyrimidine synthase of Leptothrix cholodnii (strain ATCC 51168 / LMG 8142 / SP-6) (Leptothrix discophora (strain SP-6)).